The chain runs to 678 residues: NADPH--cytochrome P450 reductase (678 aa).

G2 is subject to N-acetylglycine. Residues 2–22 (GDSHEDTSATVPEAVAEEVSL) lie on the Lumenal side of the membrane. The chain crosses the membrane as a helical span at residues 23-43 (FSTTDIVLFSLIVGVLTYWFI). At 44–678 (FKKKKEEIPE…KGRYSLDVWS (635 aa)) the chain is on the cytoplasmic side. One can recognise a Flavodoxin-like domain in the interval 80-224 (IIVFYGSQTG…DFITWREQFW (145 aa)). Residues 86–91 (SQTGTA), 138–141 (ATYG), 173–182 (LGNKTYEHFN), and D208 contribute to the FMN site. Residues 279 to 521 (KNPFLAAVTT…FVRKSQFRLP (243 aa)) enclose the FAD-binding FR-type domain. Residue R298 participates in NADP(+) binding. Residues R424, 454-457 (RYYS), 472-474 (CAV), Y478, and 488-491 (GVAT) each bind FAD. NADP(+) contacts are provided by residues T535, 596–597 (SR), 602–606 (KVYVQ), and D639. W677 is an FAD binding site.

This sequence belongs to the NADPH--cytochrome P450 reductase family. The protein in the N-terminal section; belongs to the flavodoxin family. It in the C-terminal section; belongs to the flavoprotein pyridine nucleotide cytochrome reductase family. Requires FAD as cofactor. FMN serves as cofactor.

The protein resides in the endoplasmic reticulum membrane. The catalysed reaction is 2 oxidized [cytochrome P450] + NADPH = 2 reduced [cytochrome P450] + NADP(+) + H(+). Functionally, this enzyme is required for electron transfer from NADP to cytochrome P450 in microsomes. It can also provide electron transfer to heme oxygenase and cytochrome B5. The sequence is that of NADPH--cytochrome P450 reductase from Mus musculus (Mouse).